The chain runs to 750 residues: Photosystem I P700 chlorophyll a apoprotein A1 (750 aa).

Helical transmembrane passes span 70 to 93 (VFSA…FHGA), 156 to 179 (LYCT…FHYH), 195 to 219 (LNHH…HVSL), 291 to 309 (IIHH…GHMY), 346 to 369 (WHAQ…HHMY), 385 to 411 (LSLF…IFMV), 433 to 455 (AIIS…LYIH), and 531 to 549 (FLVH…LILL). [4Fe-4S] cluster-binding residues include C573 and C582. The next 2 membrane-spanning stretches (helical) occupy residues 589-610 (HVFL…HFSW) and 664-686 (LSAY…MFLF). H675 lines the chlorophyll a' pocket. Chlorophyll a contacts are provided by M683 and Y691. Residue W692 participates in phylloquinone binding. The chain crosses the membrane as a helical span at residues 724–744 (AVGVTHYLLGGIATTWAFFLA).

Belongs to the PsaA/PsaB family. In terms of assembly, the PsaA/B heterodimer binds the P700 chlorophyll special pair and subsequent electron acceptors. PSI consists of a core antenna complex that captures photons, and an electron transfer chain that converts photonic excitation into a charge separation. The eukaryotic PSI reaction center is composed of at least 11 subunits. P700 is a chlorophyll a/chlorophyll a' dimer, A0 is one or more chlorophyll a, A1 is one or both phylloquinones and FX is a shared 4Fe-4S iron-sulfur center. is required as a cofactor.

The protein localises to the plastid. It is found in the chloroplast thylakoid membrane. It carries out the reaction reduced [plastocyanin] + hnu + oxidized [2Fe-2S]-[ferredoxin] = oxidized [plastocyanin] + reduced [2Fe-2S]-[ferredoxin]. In terms of biological role, psaA and PsaB bind P700, the primary electron donor of photosystem I (PSI), as well as the electron acceptors A0, A1 and FX. PSI is a plastocyanin-ferredoxin oxidoreductase, converting photonic excitation into a charge separation, which transfers an electron from the donor P700 chlorophyll pair to the spectroscopically characterized acceptors A0, A1, FX, FA and FB in turn. Oxidized P700 is reduced on the lumenal side of the thylakoid membrane by plastocyanin. This is Photosystem I P700 chlorophyll a apoprotein A1 from Phaseolus vulgaris (Kidney bean).